The primary structure comprises 286 residues: Beta-lactamase SHV-2 (286 aa).

A signal peptide spans 1-21 (MRYIRLCIISLLATLPLAVHA). The Acyl-ester intermediate role is filled by Ser-66. A disulfide bridge links Cys-73 with Cys-119. Glu-164 acts as the Proton acceptor in catalysis. Residue 230 to 232 (KTG) coordinates substrate.

Belongs to the class-A beta-lactamase family.

The enzyme catalyses a beta-lactam + H2O = a substituted beta-amino acid. Its function is as follows. This enzyme hydrolyzes cefotaxime, ceftazidime and other broad spectrum cephalosporins. The polypeptide is Beta-lactamase SHV-2 (bla) (Escherichia coli).